Reading from the N-terminus, the 487-residue chain is 2-aminomuconic semialdehyde dehydrogenase (487 aa).

231 to 236 provides a ligand contact to NAD(+); sequence GSTATA. Glu253 acts as the Proton acceptor in catalysis. Residue Cys287 is the Nucleophile of the active site.

It belongs to the aldehyde dehydrogenase family.

It is found in the cytoplasm. The catalysed reaction is 2-aminomuconate 6-semialdehyde + NAD(+) + H2O = (2Z,4E)-2-aminomuconate + NADH + 2 H(+). It participates in amino-acid degradation; L-kynurenine degradation. Catalyzes the NAD-dependent oxidation of 2-aminomuconic semialdehyde of the kynurenine metabolic pathway in L-tryptophan degradation. This chain is 2-aminomuconic semialdehyde dehydrogenase (aldh8a1), found in Danio rerio (Zebrafish).